The following is a 226-amino-acid chain: Thiamine-phosphate synthase (226 aa).

Residues 46 to 50 and Asn87 each bind 4-amino-2-methyl-5-(diphosphooxymethyl)pyrimidine; that span reads QLRDK. Mg(2+) contacts are provided by Asp88 and Asp107. Ser126 lines the 4-amino-2-methyl-5-(diphosphooxymethyl)pyrimidine pocket. 152 to 154 contributes to the 2-[(2R,5Z)-2-carboxy-4-methylthiazol-5(2H)-ylidene]ethyl phosphate binding site; sequence TPT. Position 155 (Lys155) interacts with 4-amino-2-methyl-5-(diphosphooxymethyl)pyrimidine. A 2-[(2R,5Z)-2-carboxy-4-methylthiazol-5(2H)-ylidene]ethyl phosphate-binding site is contributed by Gly183.

It belongs to the thiamine-phosphate synthase family. It depends on Mg(2+) as a cofactor.

The enzyme catalyses 2-[(2R,5Z)-2-carboxy-4-methylthiazol-5(2H)-ylidene]ethyl phosphate + 4-amino-2-methyl-5-(diphosphooxymethyl)pyrimidine + 2 H(+) = thiamine phosphate + CO2 + diphosphate. It carries out the reaction 2-(2-carboxy-4-methylthiazol-5-yl)ethyl phosphate + 4-amino-2-methyl-5-(diphosphooxymethyl)pyrimidine + 2 H(+) = thiamine phosphate + CO2 + diphosphate. It catalyses the reaction 4-methyl-5-(2-phosphooxyethyl)-thiazole + 4-amino-2-methyl-5-(diphosphooxymethyl)pyrimidine + H(+) = thiamine phosphate + diphosphate. Its pathway is cofactor biosynthesis; thiamine diphosphate biosynthesis; thiamine phosphate from 4-amino-2-methyl-5-diphosphomethylpyrimidine and 4-methyl-5-(2-phosphoethyl)-thiazole: step 1/1. Condenses 4-methyl-5-(beta-hydroxyethyl)thiazole monophosphate (THZ-P) and 2-methyl-4-amino-5-hydroxymethyl pyrimidine pyrophosphate (HMP-PP) to form thiamine monophosphate (TMP). This is Thiamine-phosphate synthase from Mycobacterium sp. (strain KMS).